Consider the following 310-residue polypeptide: UPF0761 membrane protein VSAL_I2938 (310 aa).

The next 6 membrane-spanning stretches (helical) occupy residues 34–54 (YMAY…LSVL), 97–117 (MTAV…SAID), 136–156 (FSLY…SLAA), 178–198 (LLGW…YLLV), 207–227 (HALV…VGFA), and 242–262 (ALAA…IVLI).

It belongs to the UPF0761 family.

The protein localises to the cell inner membrane. This Aliivibrio salmonicida (strain LFI1238) (Vibrio salmonicida (strain LFI1238)) protein is UPF0761 membrane protein VSAL_I2938.